The primary structure comprises 375 residues: tRNA(Met) cytidine acetate ligase (375 aa).

ATP contacts are provided by residues 7-20 (VVEYNPFHNGHRYH), Gly-101, Asn-151, and Arg-176.

This sequence belongs to the TmcAL family.

It localises to the cytoplasm. It carries out the reaction cytidine(34) in elongator tRNA(Met) + acetate + ATP = N(4)-acetylcytidine(34) in elongator tRNA(Met) + AMP + diphosphate. Its function is as follows. Catalyzes the formation of N(4)-acetylcytidine (ac(4)C) at the wobble position of elongator tRNA(Met), using acetate and ATP as substrates. First activates an acetate ion to form acetyladenylate (Ac-AMP) and then transfers the acetyl group to tRNA to form ac(4)C34. The chain is tRNA(Met) cytidine acetate ligase from Limosilactobacillus fermentum (strain NBRC 3956 / LMG 18251) (Lactobacillus fermentum).